Here is a 294-residue protein sequence, read N- to C-terminus: Nucleotide-binding protein lp_0779 (294 aa).

G12–T19 contributes to the ATP binding site. D62 to S65 provides a ligand contact to GTP.

The protein belongs to the RapZ-like family.

Its function is as follows. Displays ATPase and GTPase activities. This is Nucleotide-binding protein lp_0779 from Lactiplantibacillus plantarum (strain ATCC BAA-793 / NCIMB 8826 / WCFS1) (Lactobacillus plantarum).